The primary structure comprises 445 residues: Rab GDP dissociation inhibitor beta (445 aa).

The residue at position 1 (methionine 1) is an N-acetylmethionine. At lysine 57 the chain carries N6-succinyllysine. Serine 61 bears the Phosphoserine mark. Lysine 112 is modified (N6-acetyllysine). Serine 130 carries the phosphoserine modification. At lysine 269 the chain carries N6-acetyllysine. The residue at position 382 (serine 382) is a Phosphoserine.

The protein belongs to the Rab GDI family. As to quaternary structure, interacts with RHOH. Interacts with the GDP-bound inactive forms of RAB3A, RAB3B, RAB3C, RAB5A, RAB5B, RAB5C, RAB8A, RAB8B, RAB10, RAB12, RAB35, and RAB43; binds RAB3D to a lesser extent. Interacts with DZIP1; this interaction negatively regulates the interaction of GDI2 with GDP-bound RAB8A. In terms of tissue distribution, ubiquitous.

It localises to the cytoplasm. The protein localises to the membrane. It is found in the golgi apparatus. Its subcellular location is the trans-Golgi network. In terms of biological role, GDP-dissociation inhibitor preventing the GDP to GTP exchange of most Rab proteins. By keeping these small GTPases in their inactive GDP-bound form regulates intracellular membrane trafficking. Negatively regulates protein transport to the cilium and ciliogenesis through the inhibition of RAB8A. The protein is Rab GDP dissociation inhibitor beta (GDI2) of Homo sapiens (Human).